The following is a 482-amino-acid chain: ATP synthase subunit beta (482 aa).

161 to 168 (GGAGVGKT) contacts ATP.

The protein belongs to the ATPase alpha/beta chains family. In terms of assembly, F-type ATPases have 2 components, CF(1) - the catalytic core - and CF(0) - the membrane proton channel. CF(1) has five subunits: alpha(3), beta(3), gamma(1), delta(1), epsilon(1). CF(0) has three main subunits: a(1), b(2) and c(9-12). The alpha and beta chains form an alternating ring which encloses part of the gamma chain. CF(1) is attached to CF(0) by a central stalk formed by the gamma and epsilon chains, while a peripheral stalk is formed by the delta and b chains.

The protein resides in the cell inner membrane. The enzyme catalyses ATP + H2O + 4 H(+)(in) = ADP + phosphate + 5 H(+)(out). In terms of biological role, produces ATP from ADP in the presence of a proton gradient across the membrane. The catalytic sites are hosted primarily by the beta subunits. This Anaeromyxobacter dehalogenans (strain 2CP-C) protein is ATP synthase subunit beta.